The following is a 358-amino-acid chain: 3-isopropylmalate dehydrogenase (358 aa).

76–89 (GPRWDNLTGAERPE) is an NAD(+) binding site. Residues R96, R106, R135, and D225 each contribute to the substrate site. Mg(2+) is bound by residues D225, D249, and D253. 283-295 (GSAPDIAGQNKAN) provides a ligand contact to NAD(+).

It belongs to the isocitrate and isopropylmalate dehydrogenases family. LeuB type 1 subfamily. Homodimer. Mg(2+) is required as a cofactor. It depends on Mn(2+) as a cofactor.

It is found in the cytoplasm. The enzyme catalyses (2R,3S)-3-isopropylmalate + NAD(+) = 4-methyl-2-oxopentanoate + CO2 + NADH. It functions in the pathway amino-acid biosynthesis; L-leucine biosynthesis; L-leucine from 3-methyl-2-oxobutanoate: step 3/4. In terms of biological role, catalyzes the oxidation of 3-carboxy-2-hydroxy-4-methylpentanoate (3-isopropylmalate) to 3-carboxy-4-methyl-2-oxopentanoate. The product decarboxylates to 4-methyl-2 oxopentanoate. This is 3-isopropylmalate dehydrogenase from Oleidesulfovibrio alaskensis (strain ATCC BAA-1058 / DSM 17464 / G20) (Desulfovibrio alaskensis).